The chain runs to 278 residues: MKHETIVLADGFRVGVSTVGTGAPLVFLHGLSVSAKAYEEMLTRLAEHGFRVIALDAANHGRSGSLPTGHTVEDMTRVTLKTLDELDIHRAIFAGHSMGGGMVVEIAARHPHRVAAAVLLDAAAGQEHHDNIKVGHYATLAFRAAKKLGEAVTDIVGDGYEAMHLRDTGEKLSFLGMLRDSVSGLRFVRAAFALMKADTTPLLHAMYRHGVPTAVLHGLHDQIVPYEAGLSTAKITNASFYGVDGFHSWMLADPELAADLIALALLDLFPRRYITGAG.

The region spanning proline 24–phenylalanine 240 is the AB hydrolase-1 domain. Catalysis depends on residues serine 97 and aspartate 221.

This sequence belongs to the AB hydrolase superfamily.

The polypeptide is Putative non-heme haloperoxidase (59.2) (Mycobacterium (Mycobacteriophage D29)).